Here is a 1840-residue protein sequence, read N- to C-terminus: Sodium channel protein type 4 subunit alpha (1840 aa).

The Cytoplasmic portion of the chain corresponds to Met1–Ala131. The segment covering Glu36 to Ala60 has biased composition (basic and acidic residues). Residues Glu36–Asn63 form a disordered region. The stretch at Leu113–Asn448 is one I repeat. The chain crosses the membrane as a helical span at residues Leu132–Met150. The Extracellular portion of the chain corresponds to Ser151–Ser157. Residues Lys158–Ala178 traverse the membrane as a helical segment. Topologically, residues Arg179–Pro192 are cytoplasmic. A helical transmembrane segment spans residues Trp193–Val210. The Extracellular portion of the chain corresponds to Asp211–Ser216. The helical transmembrane segment at Ala217–Ile233 threads the bilayer. At Pro234–Asp252 the chain is on the cytoplasmic side. Residues Val253–Phe272 form a helical membrane-spanning segment. The Extracellular portion of the chain corresponds to Met273 to Thr385. A disulfide bridge connects residues Cys280 and Cys354. Asn288, Asn291, Asn297, Asn303, Asn309, Asn315, Asn327, and Asn356 each carry an N-linked (GlcNAc...) asparagine glycan. Residues Cys363 and Cys369 are joined by a disulfide bond. Residues Phe386 to Leu410 constitute an intramembrane region (pore-forming). At Arg411–Tyr417 the chain is on the extracellular side. A helical transmembrane segment spans residues Met418–Ala438. The Cytoplasmic portion of the chain corresponds to Val439–Pro572. The disordered stretch occupies residues Ala481–Ser522. At Ser487 the chain carries Phosphoserine. One copy of the II repeat lies at Cys554–Gly826. A helical membrane pass occupies residues Phe573–Met591. Residues Glu592–Asn602 are Extracellular-facing. Residues Val603–Lys622 form a helical membrane-spanning segment. Over Leu623–Trp636 the chain is Cytoplasmic. The helical transmembrane segment at Asn637–Val656 threads the bilayer. Residues Gln657–Gly658 are Extracellular-facing. The chain crosses the membrane as a helical span at residues Leu659–Ser676. Residues Trp677–Gly692 are Cytoplasmic-facing. The chain crosses the membrane as a helical span at residues Ala693 to Val711. Residues Gly712–Asp740 lie on the Extracellular side of the membrane. Cysteines 725 and 731 form a disulfide. The segment at residues Phe741 to Trp761 is an intramembrane region (pore-forming). Topologically, residues Asp762–Cys772 are extracellular. The cysteines at positions 763 and 772 are disulfide-linked. A helical transmembrane segment spans residues Leu773–Phe791. Residues Leu792–Trp1025 lie on the Cytoplasmic side of the membrane. Disordered regions lie at residues Glu854 to Asn884 and Asp925 to Pro983. Over residues Glu868 to Asn884 the composition is skewed to basic and acidic residues. Acidic residues-rich tracts occupy residues Asp925 to Pro940 and Glu968 to Pro983. The III repeat unit spans residues Arg1006–Leu1319. Residues Phe1026 to Phe1043 traverse the membrane as a helical segment. Residues Glu1044–Thr1056 are Extracellular-facing. The helical transmembrane segment at Ile1057–Leu1075 threads the bilayer. At Lys1076–Ala1089 the chain is on the cytoplasmic side. The helical transmembrane segment at Trp1090–Asn1108 threads the bilayer. Over Trp1109 to Gly1116 the chain is Extracellular. Residues Pro1117–Arg1135 form a helical membrane-spanning segment. The Cytoplasmic portion of the chain corresponds to Phe1136–Ser1152. The chain crosses the membrane as a helical span at residues Ile1153 to Val1172. At Asn1173 to Val1223 the chain is on the extracellular side. Residue Asn1198 is glycosylated (N-linked (GlcNAc...) asparagine). Residues Gly1224–Ala1245 constitute an intramembrane region (pore-forming). Residues Ala1246–Leu1262 are Extracellular-facing. Residues Tyr1263–Ile1284 traverse the membrane as a helical segment. Topologically, residues Gly1285 to Val1347 are cytoplasmic. An important for rapid channel inactivation region spans residues Ile1303–Met1305. Residues Ile1328–Gln1626 form an IV repeat. Residues Phe1348 to Val1365 form a helical membrane-spanning segment. Topologically, residues Glu1366–Asp1376 are extracellular. Residues Ile1377–Leu1395 form a helical membrane-spanning segment. At Lys1396 to Ile1407 the chain is on the cytoplasmic side. Residues Gly1408–Ala1425 form a helical membrane-spanning segment. The Extracellular segment spans residues Leu1426–Thr1438. A helical membrane pass occupies residues Leu1439–Ile1455. Topologically, residues Arg1456 to Ala1474 are cytoplasmic. Residues Leu1475–Phe1492 traverse the membrane as a helical segment. At Gly1493–Thr1514 the chain is on the extracellular side. Residues Phe1515 to Pro1537 constitute an intramembrane region (pore-forming). The Extracellular portion of the chain corresponds to Ile1538–Gly1567. A disulfide bridge links Cys1546 with Cys1561. A helical membrane pass occupies residues Ile1568–Ile1590. Topologically, residues Leu1591–Val1840 are cytoplasmic. Residues Glu1720–His1749 form the IQ domain. The disordered stretch occupies residues His1775–Val1840. Over residues Pro1804–Thr1813 the composition is skewed to low complexity. Residues Pro1814–Ser1824 are compositionally biased toward pro residues.

The protein belongs to the sodium channel (TC 1.A.1.10) family. Nav1.4/SCN4A subfamily. In terms of assembly, the Nav1.4 voltage-gated sodium channel consists of an ion-conducting alpha subunit SCN4A which is functional on its own and a regulatory beta subunit SCN1B. SCN1B strongly enhances the presence of SCN4A at the cell surface. SCN1B is also required for rapid channel inactivation and recovery after inactivation. It prevents the decrease of channel activity in response to repetitive, high-frequency depolarizations. Interacts with the syntrophins SNTA1, SNTB1 and SNTB2 (via PDZ domain); probably links SCN4A to the actin cytoskeleton and the extracellular matrix via the dystrophin-associated protein complex and regulates its localization in muscle cells. Interacts with TMEM233; probable regulator of the channel. Detected in skeletal muscle.

The protein localises to the cell membrane. The catalysed reaction is Na(+)(in) = Na(+)(out). Its activity is regulated as follows. Potently inhibited by tetrodotoxin and saxitoxin. Inhibited by the conotoxin GVIIJ. In terms of biological role, pore-forming subunit of Nav1.4, a voltage-gated sodium (Nav) channel that directly mediates the depolarizing phase of action potentials in excitable membranes. Navs, also called VGSCs (voltage-gated sodium channels) or VDSCs (voltage-dependent sodium channels), operate by switching between closed and open conformations depending on the voltage difference across the membrane. In the open conformation they allow Na(+) ions to selectively pass through the pore, along their electrochemical gradient. The influx of Na+ ions provokes membrane depolarization, initiating the propagation of electrical signals throughout cells and tissues. Highly expressed in skeletal muscles, Nav1.4 generates the action potential crucial for muscle contraction. The sequence is that of Sodium channel protein type 4 subunit alpha from Rattus norvegicus (Rat).